Consider the following 1733-residue polypeptide: ATP-binding cassette sub-family A member 17 (1733 aa).

The next 7 membrane-spanning stretches (helical) occupy residues 22–42 (TLITLLEMLMPLLFCAIVLYL), 262–282 (FPLLLMLSFICVELIITNSVL), 306–326 (AWFITFFISVSITVSVMTVLF), 342–362 (TLIFIFLMCFAIATIFFAFMM), 372–392 (GTVIGGTVFFFTYLPYMYITF), 403–423 (ILSCLFSNVAMATGVRFISLF), and 444–464 (FAQVLGMLLLDSFLYCLIAFL). An ABC transporter 1 domain is found at 519–752 (IEIQHLYKVF…YGAGYYMTII (234 aa)). 555-562 (GHNGAGKT) lines the ATP pocket. The N-linked (GlcNAc...) asparagine glycan is linked to Asn-609. Helical transmembrane passes span 906 to 926 (LVLSVQVLLPLAIIMLSLTFF), 1082 to 1102 (LVVNFLFGIAFLSSSFSILTV), 1128 to 1148 (LLWDLISFLVPTLLLVLVFLW), 1160 to 1180 (IPAVVLIMMLYGWAVIPLVYT), 1192 to 1212 (CVKLVVMLTFLSISPVVLVTV), 1230 to 1250 (IFLILPGHCLGMALSNLYYNF), and 1287 to 1307 (IGKYLTALAVLGPVYITMLFL). The ABC transporter 2 domain occupies 1366–1599 (LVVKEVSKVY…FGISYSLQAK (234 aa)). 1401-1408 (GLNGAGKT) serves as a coordination point for ATP. The span at 1681 to 1692 (ESSTKEQIQQEQ) shows a compositional bias: polar residues. A disordered region spans residues 1681–1733 (ESSTKEQIQQEQAVLASPSPPSNSRPISSPPSRLSSPTPKPLPSPPPSEPILL). The span at 1704–1717 (SRPISSPPSRLSSP) shows a compositional bias: low complexity. The span at 1718 to 1733 (TPKPLPSPPPSEPILL) shows a compositional bias: pro residues.

It belongs to the ABC transporter superfamily. ABCA family. Post-translationally, N-glycosylated. In the testis, detected predominantly in elongated spermatids at the late stage of germ cell development and in sperm, with no expression detected in immature germ cells such as spermatogonia and spermatocytes or in somatic cells such as Sertoli cells (at protein level). Expressed in the head and tail midpiece of elongated spermatids and sperm (at protein level). Expressed exclusively in the testis.

It is found in the endoplasmic reticulum membrane. The protein resides in the cytoplasm. The catalysed reaction is cholesterol(in) + ATP + H2O = cholesterol(out) + ADP + phosphate + H(+). Its function is as follows. Promotes cholesterol efflux from sperm which renders sperm capable of fertilization. Has also been shown to decrease levels of intracellular esterified neutral lipids including cholesteryl esters, fatty acid esters and triacylglycerols. The protein is ATP-binding cassette sub-family A member 17 of Mus musculus (Mouse).